Reading from the N-terminus, the 309-residue chain is Elongation factor Ts (309 aa).

Residues 82 to 85 are involved in Mg(2+) ion dislocation from EF-Tu; sequence TDFV.

It belongs to the EF-Ts family.

The protein localises to the cytoplasm. Associates with the EF-Tu.GDP complex and induces the exchange of GDP to GTP. It remains bound to the aminoacyl-tRNA.EF-Tu.GTP complex up to the GTP hydrolysis stage on the ribosome. This is Elongation factor Ts from Rickettsia massiliae (strain Mtu5).